The chain runs to 61 residues: Beta-defensin 13 (61 aa).

The signal sequence occupies residues 1–21 (MRLLYLLFAAVMLLFLQAVPA). Residues Ser-24, Arg-40, His-44, Asn-51, Asn-53, Gly-54, His-58, and Lys-61 each coordinate a 1,2-diacyl-sn-glycero-3-phosphate. 3 cysteine pairs are disulfide-bonded: Cys-31–Cys-59, Cys-38–Cys-52, and Cys-42–Cys-60.

The protein belongs to the beta-defensin family. As to quaternary structure, monomeric. Forms multimeric, probably including tetrameric, complexes in the presence of phospholipid phosphatidic acid.

Its subcellular location is the secreted. Functionally, exhibits antimicrobial activity against fungi. Antimicrobial activity in a pH-dependent manner against the yeast C.albicans; activity is salt tolerant and retains antifungal activity in NaCl concentrations of 100mM. Permeabilizes C.albicans cell membranes via targeting plasma membrane phospholipid phosphatidic acid. The protein is Beta-defensin 13 of Crocodylus porosus (Saltwater crocodile).